Reading from the N-terminus, the 328-residue chain is DNA-directed RNA polymerase subunit alpha (328 aa).

Residues 1–234 (MQGSVTEFLK…EQLDAFVDLR (234 aa)) form an alpha N-terminal domain (alpha-NTD) region. The tract at residues 248-328 (FDPILLRPVD…NWPPASIAED (81 aa)) is alpha C-terminal domain (alpha-CTD).

Belongs to the RNA polymerase alpha chain family. As to quaternary structure, homodimer. The RNAP catalytic core consists of 2 alpha, 1 beta, 1 beta' and 1 omega subunit. When a sigma factor is associated with the core the holoenzyme is formed, which can initiate transcription.

The enzyme catalyses RNA(n) + a ribonucleoside 5'-triphosphate = RNA(n+1) + diphosphate. Functionally, DNA-dependent RNA polymerase catalyzes the transcription of DNA into RNA using the four ribonucleoside triphosphates as substrates. The sequence is that of DNA-directed RNA polymerase subunit alpha from Haemophilus influenzae (strain PittEE).